Here is a 99-residue protein sequence, read N- to C-terminus: Large ribosomal subunit protein uL23 (99 aa).

This sequence belongs to the universal ribosomal protein uL23 family. As to quaternary structure, part of the 50S ribosomal subunit. Contacts protein L29, and trigger factor when it is bound to the ribosome.

Functionally, one of the early assembly proteins it binds 23S rRNA. One of the proteins that surrounds the polypeptide exit tunnel on the outside of the ribosome. Forms the main docking site for trigger factor binding to the ribosome. The sequence is that of Large ribosomal subunit protein uL23 from Leifsonia xyli subsp. xyli (strain CTCB07).